A 217-amino-acid chain; its full sequence is Formate dehydrogenase, nitrate-inducible, cytochrome b556(Fdn) subunit (217 aa).

The Cytoplasmic portion of the chain corresponds to 1–11; it reads MSKSKMIVRTK. The helical transmembrane segment at 12 to 36 threads the bilayer; sequence FIDRACHWTVVICFFLVALSGISFF. His18 contacts heme b. Residues 37–52 lie on the Periplasmic side of the membrane; the sequence is FPTLQWLTQTFGTPQM. Residues 53–74 traverse the membrane as a helical segment; it reads GRILHPFFGIAIFVALMFMFVR. His57 is a heme b binding site. The Cytoplasmic portion of the chain corresponds to 75-110; the sequence is FVHHNIPDKKDIPWLLNIVEVLKGNEHKVADVGKYN. Residues 111-134 traverse the membrane as a helical segment; sequence AGQKMMFWSIMSMIFVLLVTGVII. Topologically, residues 135 to 150 are periplasmic; sequence WRPYFAQYFPMQVVRY. Residues 151 to 175 traverse the membrane as a helical segment; it reads SLLIHAAAGIILIHAILIHMYMAFW. Heme b is bound by residues His155 and His169. An a menaquinone-binding site is contributed by His169. Residues 176-217 lie on the Cytoplasmic side of the membrane; the sequence is VKGSIKGMIEGKVSRRWAKKHHPRWYREIEKAEAKKESEEGI.

The protein belongs to the formate dehydrogenase gamma subunit family. As to quaternary structure, trimer of heterotrimers, consisting of subunits alpha, beta and gamma. Requires heme as cofactor.

The protein localises to the cell inner membrane. Formate dehydrogenase allows the bacterium to use formate as major electron donor during anaerobic respiration, when nitrate is used as electron acceptor. Subunit gamma is the cytochrome b556 component of the formate dehydrogenase-N, and also contains a menaquinone reduction site that receives electrons from the beta subunit (FdnH), through its hemes. Formate dehydrogenase-N is part of a system that generates proton motive force, together with the dissimilatory nitrate reductase (Nar). The protein is Formate dehydrogenase, nitrate-inducible, cytochrome b556(Fdn) subunit (fdnI) of Escherichia coli O157:H7.